The sequence spans 232 residues: Recombination protein RecR (232 aa).

The C4-type zinc-finger motif lies at 92-107; sequence CQVCFHLSAEPVCDIC. The region spanning 115–209 is the Toprim domain; sequence SVICVVSDPR…KVTRIAFGLP (95 aa).

It belongs to the RecR family.

May play a role in DNA repair. It seems to be involved in an RecBC-independent recombinational process of DNA repair. It may act with RecF and RecO. This Synechocystis sp. (strain ATCC 27184 / PCC 6803 / Kazusa) protein is Recombination protein RecR.